Consider the following 507-residue polypeptide: ATP synthase subunit alpha, chloroplastic (507 aa).

An ATP-binding site is contributed by 170-177 (GDRQTGKT). Residue T257 is modified to Phosphothreonine.

Belongs to the ATPase alpha/beta chains family. In terms of assembly, F-type ATPases have 2 components, CF(1) - the catalytic core - and CF(0) - the membrane proton channel. CF(1) has five subunits: alpha(3), beta(3), gamma(1), delta(1), epsilon(1). CF(0) has four main subunits: a, b, b' and c.

It localises to the plastid. The protein resides in the chloroplast thylakoid membrane. It catalyses the reaction ATP + H2O + 4 H(+)(in) = ADP + phosphate + 5 H(+)(out). Its function is as follows. Produces ATP from ADP in the presence of a proton gradient across the membrane. The alpha chain is a regulatory subunit. This Aethionema grandiflorum (Persian stone-cress) protein is ATP synthase subunit alpha, chloroplastic.